A 535-amino-acid polypeptide reads, in one-letter code: Keratin, type II cytoskeletal 79 (535 aa).

Residues 1–12 show a composition bias toward polar residues; it reads MRSSVSRQTYST. Residues 1-52 are disordered; the sequence is MRSSVSRQTYSTKGGFSSNSASGGSGSQARTSFSSVTVSRSSGSGGGAHCGP. Residues 1-141 are head; that stretch reads MRSSVSRQTY…DPEIQRVRTQ (141 aa). The span at 32–42 shows a compositional bias: low complexity; the sequence is SFSSVTVSRSS. Gly residues predominate over residues 43 to 52; it reads GSGGGAHCGP. The interval 142–177 is coil 1A; that stretch reads EREQIKTLNNKFASFIDKVRFLEQQNKVLETKWALL. The IF rod domain maps to 142 to 457; that stretch reads EREQIKTLNN…KLLESEESRM (316 aa). A linker 1 region spans residues 178–198; the sequence is QEQGQNLGVTRNNLEPLFEAY. Positions 199–290 are coil 1B; that stretch reads LGSMRSTLDR…QLYEMELSQV (92 aa). The segment at 291 to 314 is linker 12; sequence QTHVSNTNVVLSMDNNRNLDLDSI. Residues 315–453 are coil 2; it reads IAEVKAQYEL…ATYRKLLESE (139 aa). Positions 454–535 are tail; the sequence is ESRMSGECPS…TTVKTSSQRY (82 aa).

It belongs to the intermediate filament family. Heterotetramer of two type I and two type II keratins. Expressed in skeletal muscle, skin and scalp, but not in any other tissues or organs examined.

The polypeptide is Keratin, type II cytoskeletal 79 (KRT79) (Homo sapiens (Human)).